A 248-amino-acid chain; its full sequence is Pyridoxine 5'-phosphate synthase (248 aa).

Residue asparagine 10 participates in 3-amino-2-oxopropyl phosphate binding. A 1-deoxy-D-xylulose 5-phosphate-binding site is contributed by 12-13 (DH). Arginine 21 contacts 3-amino-2-oxopropyl phosphate. Residue histidine 46 is the Proton acceptor of the active site. Positions 48 and 53 each coordinate 1-deoxy-D-xylulose 5-phosphate. Glutamate 73 functions as the Proton acceptor in the catalytic mechanism. Threonine 103 provides a ligand contact to 1-deoxy-D-xylulose 5-phosphate. Histidine 194 serves as the catalytic Proton donor. 3-amino-2-oxopropyl phosphate is bound by residues glycine 195 and 216-217 (GH).

The protein belongs to the PNP synthase family. In terms of assembly, homooctamer; tetramer of dimers.

The protein localises to the cytoplasm. The catalysed reaction is 3-amino-2-oxopropyl phosphate + 1-deoxy-D-xylulose 5-phosphate = pyridoxine 5'-phosphate + phosphate + 2 H2O + H(+). It functions in the pathway cofactor biosynthesis; pyridoxine 5'-phosphate biosynthesis; pyridoxine 5'-phosphate from D-erythrose 4-phosphate: step 5/5. Its function is as follows. Catalyzes the complicated ring closure reaction between the two acyclic compounds 1-deoxy-D-xylulose-5-phosphate (DXP) and 3-amino-2-oxopropyl phosphate (1-amino-acetone-3-phosphate or AAP) to form pyridoxine 5'-phosphate (PNP) and inorganic phosphate. The protein is Pyridoxine 5'-phosphate synthase of Legionella pneumophila (strain Corby).